The primary structure comprises 650 residues: Acetyl-coenzyme A synthetase (650 aa).

CoA is bound by residues 191 to 194 (RGGR), threonine 311, and asparagine 335. ATP contacts are provided by residues 387–389 (GEP), 411–416 (DTWWQT), aspartate 500, and arginine 515. Residue serine 523 participates in CoA binding. Residue arginine 526 coordinates ATP. Mg(2+)-binding residues include valine 537, histidine 539, and valine 542. Arginine 584 serves as a coordination point for CoA. The residue at position 609 (lysine 609) is an N6-acetyllysine.

Belongs to the ATP-dependent AMP-binding enzyme family. Mg(2+) serves as cofactor. Acetylated. Deacetylation by the SIR2-homolog deacetylase activates the enzyme.

It carries out the reaction acetate + ATP + CoA = acetyl-CoA + AMP + diphosphate. Catalyzes the conversion of acetate into acetyl-CoA (AcCoA), an essential intermediate at the junction of anabolic and catabolic pathways. AcsA undergoes a two-step reaction. In the first half reaction, AcsA combines acetate with ATP to form acetyl-adenylate (AcAMP) intermediate. In the second half reaction, it can then transfer the acetyl group from AcAMP to the sulfhydryl group of CoA, forming the product AcCoA. The sequence is that of Acetyl-coenzyme A synthetase from Shewanella sp. (strain ANA-3).